The sequence spans 464 residues: MSRFVPRIIPFYLLLLVAGGTANAQSTFEQKAANPFDNNNDGLPDLGMAPENHDGEKHFAEIVKDFGETSMNDNGLDTGEQAKAFALGKVRDALSQQVNQHVESWLSPWGNASVDVKVDNEGHFTGSRGSWFVPLQDNDRYLTWSQLGLTQQDNGLVSNVGVGQRWARGNWLVGYNTFYDNLLDENLQRAGFGAEAWGEYLRLSANFYQPFAAWHEQTATQEQRMARGYDLTARMRMPFYQHLNTSVSLEQYFGDRVDLFNSGTGYHNPVALSLGLNYTPVPLVTVTAQHKQGESGENQNNLGLNLNYRFGVPLKKQLSAGEVAESQSLRGSRYDNPQRNNLPTLEYRQRKTLTVFLATPPWDLKPGETVPLKLQIRSRYGIRQLIWQGDTQILSLTPGAQANSAEGWTLIMPDWQNGEGASNHWRLSVVVEDNQGQRVSSNEITLTLVEPFDALSNDELRWEP.

The signal sequence occupies residues 1–24; sequence MSRFVPRIIPFYLLLLVAGGTANA.

The protein belongs to the intimin/invasin family.

It localises to the periplasm. This is an uncharacterized protein from Escherichia coli (strain K12).